The chain runs to 283 residues: tRNA pseudouridine synthase A (283 aa).

D52 functions as the Nucleophile in the catalytic mechanism. Y148 lines the substrate pocket.

Belongs to the tRNA pseudouridine synthase TruA family. As to quaternary structure, homodimer.

It carries out the reaction uridine(38/39/40) in tRNA = pseudouridine(38/39/40) in tRNA. Its function is as follows. Formation of pseudouridine at positions 38, 39 and 40 in the anticodon stem and loop of transfer RNAs. The polypeptide is tRNA pseudouridine synthase A (Orientia tsutsugamushi (strain Ikeda) (Rickettsia tsutsugamushi)).